Consider the following 498-residue polypeptide: Early growth response protein 1 (498 aa).

Disordered regions lie at residues 137-203 and 287-308; these read NASP…TASI and PSRM…RPYA. Over residues 139–163 the composition is skewed to low complexity; the sequence is SPSSAPSSSPSSSSSSSQSPPLSCS. Residues 179–202 show a composition bias toward polar residues; the sequence is FPNSSPELFPDQSPQPFQNASTAS. C2H2-type zinc fingers lie at residues 307–331, 337–359, and 365–387; these read YACP…IRIH, FQCR…IRTH, and FACD…TKIH. The interval 378–422 is disordered; the sequence is DERKRHTKIHLRQKDKKADKATPVSVASPVSSYSPSASTSYPSPV. A compositionally biased stretch (basic residues) spans 382–392; that stretch reads RHTKIHLRQKD. A compositionally biased stretch (low complexity) spans 398 to 422; it reads ATPVSVASPVSSYSPSASTSYPSPV.

It belongs to the EGR C2H2-type zinc-finger protein family.

It is found in the nucleus. It localises to the cytoplasm. Transcriptional regulator. Recognizes and binds to the DNA sequence 5'-GCG(T/G)GGGCG-3'(EGR-site) in the promoter region of target genes. Binds double-stranded target DNA, irrespective of the cytosine methylation status. Regulates the transcription of numerous target genes, and thereby plays an important role in regulating the response to growth factors, DNA damage, and ischemia. Plays a role in the regulation of cell survival, proliferation and cell death. Mediates responses to ischemia and hypoxia; regulates the expression of proteins that are involved in inflammatory processes. Plays a role in regulating the expression of circadian clock genes. This chain is Early growth response protein 1, found in Xenopus tropicalis (Western clawed frog).